A 341-amino-acid polypeptide reads, in one-letter code: Terpene synthase 9 (341 aa).

The DDxx(x)D/E motif signature appears at 81-86; it reads DDILDS. An NDxxSxxxD/E motif motif is present at residues 222–230; sequence NDMASYCKE.

The protein belongs to the terpene synthase family.

The enzyme catalyses (2E,6E)-farnesyl diphosphate = (1S,2S,4R)-beta-elemene + diphosphate. The catalysed reaction is (2E,6E)-farnesyl diphosphate = germacrene D + diphosphate. Its function is as follows. Terpene synthase that converts its substrate farnesyl diphosphate (FPP) into the sesquiterpenes beta-elemene, germacrene D and a yet unidentified sesquiterpene. In Dictyostelium purpureum (Slime mold), this protein is Terpene synthase 9.